A 588-amino-acid chain; its full sequence is MVRNKSACVVLLFSLFLSFGLLCSAKDFPGRRGDDDPPKRYEDCRRRCEWDTRGQKEQQQCEESCKSQYGEKDQQQRHRPEDPQRRYEECQQECRQQEERQRPQCQQRCLKRFEQEQQQSQRQFQECQQHCHQQEQRPERKQQCVRECRERYQENPWRREREEEAEEEETEEGEQEQSHNPFHFHRRSFQSRFREEHGNFRVLQRFASRHPILRGINEFRLSILEANPNTFVLPHHCDAEKIYLVTNGRGTLTFLTHENKESYNVVPGVVVRVPAGSTVYLANQDNKEKLIIAVLHRPVNNPRQFEEFFPAGSQRPQSYLRAFSREILEPAFNTRSEQLDELFGGRQSHRRQQGQGMFRKASQEQIRALSQEATSPREKSGERFAFNLLYRTPRYSNQNGRFYEACPREFRQLSDINVTVSALQLNQGSIFVPHYNSKATFVVLVNEGNGYVEMVSPHLPRQSSFEEEEEQQQEQEQEEERRSGQYRKIRSQLSRGDIFVVPANFPVTFVASQNQNLRMTGFGLYNQNINPDHNQRIFVAGKINHVRQWDSQAKELAFGVSSRLVDEIFNNNPQESYFVSRQRQRASE.

The N-terminal stretch at 1–25 (MVRNKSACVVLLFSLFLSFGLLCSA) is a signal peptide. Disordered stretches follow at residues 159 to 183 (REREEEAEEEETEEGEQEQSHNPFH) and 460 to 487 (PRQSSFEEEEEQQQEQEQEEERRSGQYR). The span at 163–175 (EEAEEEETEEGEQ) shows a compositional bias: acidic residues. 2 Cupin type-1 domains span residues 182–340 (FHFH…EQLD) and 386–566 (FNLL…RLVD). The span at 465–478 (FEEEEEQQQEQEQE) shows a compositional bias: acidic residues.

The protein belongs to the 7S seed storage protein family.

Its subcellular location is the vacuole. The protein localises to the aleurone grain. Functionally, seed storage protein. This is Vicilin C72 from Gossypium hirsutum (Upland cotton).